A 470-amino-acid polypeptide reads, in one-letter code: Negative regulator of sexual conjugation and meiosis (470 aa).

The region spanning 18–295 (LRFVSIIGAG…ITLPELSTLV (278 aa)) is the Protein kinase domain. ATP-binding positions include 24 to 32 (IGAGAYGVV) and Lys-47. Asp-143 acts as the Proton acceptor in catalysis. Ser-469 bears the Phosphoserine mark.

This sequence belongs to the protein kinase superfamily. Ser/Thr protein kinase family.

It carries out the reaction L-seryl-[protein] + ATP = O-phospho-L-seryl-[protein] + ADP + H(+). The catalysed reaction is L-threonyl-[protein] + ATP = O-phospho-L-threonyl-[protein] + ADP + H(+). Its function is as follows. This protein is a negative regulator of both sexual conjugation and meiosis. It phosphorylates mei2. It blocks the onset of meiosis until conjugation takes place. The sequence is that of Negative regulator of sexual conjugation and meiosis (ran1) from Schizosaccharomyces pombe (strain 972 / ATCC 24843) (Fission yeast).